A 427-amino-acid polypeptide reads, in one-letter code: Adenylosuccinate synthetase (427 aa).

GTP contacts are provided by residues 12 to 18 (GDEGKGK) and 40 to 42 (GHT). The Proton acceptor role is filled by aspartate 13. Mg(2+) is bound by residues aspartate 13 and glycine 40. Residues 13–16 (DEGK), 38–41 (NAGH), threonine 128, arginine 142, glutamine 223, threonine 238, and arginine 302 each bind IMP. The active-site Proton donor is histidine 41. 298–304 (TTTGRNR) lines the substrate pocket. GTP-binding positions include arginine 304, 330–332 (KLD), and 412–414 (GVG).

It belongs to the adenylosuccinate synthetase family. In terms of assembly, homodimer. The cofactor is Mg(2+).

It is found in the cytoplasm. The enzyme catalyses IMP + L-aspartate + GTP = N(6)-(1,2-dicarboxyethyl)-AMP + GDP + phosphate + 2 H(+). The protein operates within purine metabolism; AMP biosynthesis via de novo pathway; AMP from IMP: step 1/2. Functionally, plays an important role in the de novo pathway of purine nucleotide biosynthesis. Catalyzes the first committed step in the biosynthesis of AMP from IMP. The chain is Adenylosuccinate synthetase from Thermobifida fusca (strain YX).